The primary structure comprises 99 residues: Protein NCBP2AS2 (99 aa).

Residues 76–99 (ELRRGLRGRSGPPPGSQRGPGANI) form a disordered region.

In Homo sapiens (Human), this protein is Protein NCBP2AS2.